The chain runs to 147 residues: uncharacterized protein (147 aa).

The signal sequence occupies residues 1 to 21 (MRTIFVGVLLLAIMGEGRLCA).

This is an uncharacterized protein from Treponema pallidum (strain Nichols).